A 98-amino-acid polypeptide reads, in one-letter code: Protein translation factor SUI1 homolog (98 aa).

It belongs to the SUI1 family.

This is Protein translation factor SUI1 homolog from Thermococcus gammatolerans (strain DSM 15229 / JCM 11827 / EJ3).